Here is a 501-residue protein sequence, read N- to C-terminus: uncharacterized protein (501 aa).

7 helical membrane passes run 14 to 34, 73 to 93, 111 to 131, 197 to 217, 274 to 294, 297 to 317, and 466 to 486; these read AIFI…SGSV, FILF…LGYM, IFGI…ICIF, FIIA…VLLI, ILLS…YYFG, FNLI…YNLI, and FLVL…RLIL.

It localises to the membrane. This is an uncharacterized protein from Dictyostelium discoideum (Social amoeba).